The primary structure comprises 152 residues: Large ribosomal subunit protein bL9 (152 aa).

Belongs to the bacterial ribosomal protein bL9 family.

Its function is as follows. Binds to the 23S rRNA. In Synechococcus sp. (strain RCC307), this protein is Large ribosomal subunit protein bL9.